The primary structure comprises 147 residues: Protein-export protein SecB 2 (147 aa).

This sequence belongs to the SecB family. Homotetramer, a dimer of dimers. One homotetramer interacts with 1 SecA dimer.

It localises to the cytoplasm. Functionally, one of the proteins required for the normal export of preproteins out of the cell cytoplasm. It is a molecular chaperone that binds to a subset of precursor proteins, maintaining them in a translocation-competent state. It also specifically binds to its receptor SecA. The sequence is that of Protein-export protein SecB 2 from Francisella tularensis subsp. novicida (strain U112).